Here is a 225-residue protein sequence, read N- to C-terminus: Endonuclease V (225 aa).

2 residues coordinate Mg(2+): aspartate 43 and aspartate 110.

This sequence belongs to the endonuclease V family. Mg(2+) is required as a cofactor.

It localises to the cytoplasm. The catalysed reaction is Endonucleolytic cleavage at apurinic or apyrimidinic sites to products with a 5'-phosphate.. Its function is as follows. DNA repair enzyme involved in the repair of deaminated bases. Selectively cleaves double-stranded DNA at the second phosphodiester bond 3' to a deoxyinosine leaving behind the intact lesion on the nicked DNA. This Thermotoga petrophila (strain ATCC BAA-488 / DSM 13995 / JCM 10881 / RKU-1) protein is Endonuclease V.